A 185-amino-acid polypeptide reads, in one-letter code: Putative sulfur carrier protein YrkF (185 aa).

Catalysis depends on cysteine 15, which acts as the Cysteine persulfide intermediate. Positions 101–185 (SDESLNILDV…GMRDWTGKTE (85 aa)) constitute a Rhodanese domain.

Belongs to the sulfur carrier protein TusA family.

The polypeptide is Putative sulfur carrier protein YrkF (yrkF) (Bacillus subtilis (strain 168)).